We begin with the raw amino-acid sequence, 390 residues long: Protein PIN-LIKES 3 (390 aa).

The Lumenal portion of the chain corresponds to Met-1–Pro-14. The helical transmembrane segment at Val-15 to Leu-35 threads the bilayer. Residues Leu-36–Tyr-43 are Cytoplasmic-facing. A helical transmembrane segment spans residues Leu-44–Leu-61. At Ala-62–Met-76 the chain is on the lumenal side. The chain crosses the membrane as a helical span at residues Pro-77–Ile-97. At Thr-98–Leu-107 the chain is on the cytoplasmic side. A helical transmembrane segment spans residues Ile-108–Val-128. The Lumenal portion of the chain corresponds to Cys-129–Lys-144. The helical transmembrane segment at Tyr-145 to Val-165 threads the bilayer. Topologically, residues Tyr-166–Thr-227 are cytoplasmic. A helical membrane pass occupies residues Ile-228–Leu-248. The Lumenal portion of the chain corresponds to Arg-249–Ser-265. The helical transmembrane segment at Val-266–Leu-286 threads the bilayer. Topologically, residues Lys-287–Ser-297 are cytoplasmic. Residues Ser-298–Val-318 form a helical membrane-spanning segment. At Arg-319–Pro-331 the chain is on the lumenal side. Residues Leu-332–Ile-352 traverse the membrane as a helical segment. At Thr-353–Ser-364 the chain is on the cytoplasmic side. Residues Val-365–Phe-385 traverse the membrane as a helical segment. At Met-386–Ala-390 the chain is on the lumenal side.

Belongs to the auxin efflux carrier (TC 2.A.69.2) family. As to expression, expressed in seedlings, rosette and cauline leaves, flowers and siliques.

It is found in the endoplasmic reticulum membrane. Involved in cellular auxin homeostasis by regulating auxin metabolism. Regulates intracellular auxin accumulation at the endoplasmic reticulum and thus auxin availability for nuclear auxin signaling. The sequence is that of Protein PIN-LIKES 3 (PILS3) from Arabidopsis thaliana (Mouse-ear cress).